The chain runs to 94 residues: DNA-directed RNA polymerase subunit omega (94 aa).

Belongs to the RNA polymerase subunit omega family. As to quaternary structure, the RNAP catalytic core consists of 2 alpha, 1 beta, 1 beta' and 1 omega subunit. When a sigma factor is associated with the core the holoenzyme is formed, which can initiate transcription.

It catalyses the reaction RNA(n) + a ribonucleoside 5'-triphosphate = RNA(n+1) + diphosphate. Its function is as follows. Promotes RNA polymerase assembly. Latches the N- and C-terminal regions of the beta' subunit thereby facilitating its interaction with the beta and alpha subunits. The chain is DNA-directed RNA polymerase subunit omega from Bifidobacterium longum (strain DJO10A).